A 300-amino-acid polypeptide reads, in one-letter code: uncharacterized protein (300 aa).

Polar residues predominate over residues 1–11 (MYNEGVTSPSQ). The interval 1-20 (MYNEGVTSPSQLARKKNATD) is disordered. The recombinase DNA-binding region spans 1–92 (MYNEGVTSPS…QEILITRKRR (92 aa)). Residues 162–249 (SKENYFKELS…DLEFQKIEKE (88 aa)) are a coiled coil.

This is an uncharacterized protein from Bacillus subtilis (strain 168).